The following is a 397-amino-acid chain: Protein-glutamate methylesterase/protein-glutamine glutaminase of group 2 operon (397 aa).

One can recognise a Response regulatory domain in the interval 21–139; it reads RVMIVDDSVV…EASAADTFHH (119 aa). Aspartate 72 carries the post-translational modification 4-aspartylphosphate. The 190-residue stretch at 199 to 388 folds into the CheB-type methylesterase domain; that stretch reads PFSTLAPKVL…LPLNQIGAKV (190 aa). Catalysis depends on residues serine 213, histidine 241, and aspartate 337.

The protein belongs to the CheB family. Post-translationally, phosphorylated by CheA. Phosphorylation of the N-terminal regulatory domain activates the methylesterase activity.

Its subcellular location is the cytoplasm. The enzyme catalyses [protein]-L-glutamate 5-O-methyl ester + H2O = L-glutamyl-[protein] + methanol + H(+). It carries out the reaction L-glutaminyl-[protein] + H2O = L-glutamyl-[protein] + NH4(+). In terms of biological role, involved in chemotaxis. Part of a chemotaxis signal transduction system that modulates chemotaxis in response to various stimuli. Catalyzes the demethylation of specific methylglutamate residues introduced into the chemoreceptors (methyl-accepting chemotaxis proteins or MCP) by CheR. Also mediates the irreversible deamidation of specific glutamine residues to glutamic acid. This Bradyrhizobium diazoefficiens (strain JCM 10833 / BCRC 13528 / IAM 13628 / NBRC 14792 / USDA 110) protein is Protein-glutamate methylesterase/protein-glutamine glutaminase of group 2 operon.